The following is a 42-amino-acid chain: Serine/threonine-protein phosphatase 5 (42 aa).

The tract at residues 38-42 is required for autoinhibition; the sequence is QLGVM.

This sequence belongs to the PPP phosphatase family. PP-5 (PP-T) subfamily. In terms of assembly, probably forms a complex composed of chaperones HSP90 and HSP70, co-chaperones STIP1/HOP, CDC37, PPP5C, PTGES3/p23, TSC1 and client protein TSC2. Probably forms a complex composed of chaperones HSP90 and HSP70, co-chaperones CDC37, PPP5C, TSC1 and client protein TSC2, CDK4, AKT, RAF1 and NR3C1; this complex does not contain co-chaperones STIP1/HOP and PTGES3/p23. Part of a complex with HSP90/HSP90AA1 and steroid receptors. Interacts (via TPR repeats) with HSP90AA1 (via TPR repeat-binding motif) or HSPA1A/HSPA1B; the interaction is direct and activates the phosphatase activity. Dissociates from HSPA1A/HSPA1B and HSP90AA1 in response to arachidonic acid. Interacts with CPNE1 (via VWFA domain). Interacts with CDC16, CDC27. Interacts with KLHDC10 (via the 6 Kelch repeats); inhibits the phosphatase activity on MAP3K5. Interacts with ATM and ATR; both interactions are induced by DNA damage and enhance ATM and ATR kinase activity. Interacts with RAD17; reduced by DNA damage. Interacts with nuclear receptors such as NR3C1/GCR and PPARG (activated by agonist); regulates their transactivation activities. Interacts (via TPR repeats) with S100 proteins S100A1, S100A2, S100A6, S100B and S100P; the interactions are calcium-dependent, strongly activate PPP5C phosphatase activity and compete with HSP90AA1 and MAP3K5 interactions. Interacts with SMAD2 and SMAD3 but not with SMAD1; decreases SMAD3 phosphorylation and protein levels. Interacts (via TPR repeats) with CRY1 and CRY2; the interaction with CRY2 down-regulates the phosphatase activity on CSNK1E. Interacts (via TPR repeats) with the active form of RAC1, GNA12 or GNA13; these interactions activate the phosphatase activity and translocate PPP5C to the cell membrane. Interacts with FLCN. Mg(2+) serves as cofactor. Requires Mn(2+) as cofactor. In terms of processing, activated by at least two different proteolytic cleavages producing a 56 kDa and a 50 kDa form.

The protein resides in the nucleus. Its subcellular location is the cytoplasm. It is found in the cell membrane. The enzyme catalyses O-phospho-L-seryl-[protein] + H2O = L-seryl-[protein] + phosphate. The catalysed reaction is O-phospho-L-threonyl-[protein] + H2O = L-threonyl-[protein] + phosphate. Its activity is regulated as follows. Autoinhibited. In the autoinhibited state, the TPR domain interacts with the catalytic region and prevents substrate access to the catalytic pocket. Allosterically activated by various polyunsaturated fatty acids, free long-chain fatty-acids and long-chain fatty acyl-CoA esters, arachidonic acid being the most effective activator. HSP90A and probably RAC1, GNA12 and GNA13 can also release the autoinhibition by the TPR repeat. Activation by RAC1, GNA12 and GNA13 is synergistic with the one produced by fatty acids binding. Inhibited by okadaic acid. In terms of biological role, serine/threonine-protein phosphatase that dephosphorylates a myriad of proteins involved in different signaling pathways including the kinases CSNK1E, ASK1/MAP3K5, PRKDC and RAF1, the nuclear receptors NR3C1, PPARG, ESR1 and ESR2, SMAD proteins and TAU/MAPT. Implicated in wide ranging cellular processes, including apoptosis, differentiation, DNA damage response, cell survival, regulation of ion channels or circadian rhythms, in response to steroid and thyroid hormones, calcium, fatty acids, TGF-beta as well as oxidative and genotoxic stresses. Participates in the control of DNA damage response mechanisms such as checkpoint activation and DNA damage repair through, for instance, the regulation ATM/ATR-signaling and dephosphorylation of PRKDC and TP53BP1. Inhibits ASK1/MAP3K5-mediated apoptosis induced by oxidative stress. Plays a positive role in adipogenesis, mainly through the dephosphorylation and activation of PPARG transactivation function. Also dephosphorylates and inhibits the anti-adipogenic effect of NR3C1. Regulates the circadian rhythms, through the dephosphorylation and activation of CSNK1E. May modulate TGF-beta signaling pathway by the regulation of SMAD3 phosphorylation and protein expression levels. Dephosphorylates and may play a role in the regulation of TAU/MAPT. Through their dephosphorylation, may play a role in the regulation of ions channels such as KCNH2. Dephosphorylate FNIP1, disrupting interaction with HSP90AA1/Hsp90. This chain is Serine/threonine-protein phosphatase 5 (PPP5C), found in Oryctolagus cuniculus (Rabbit).